The chain runs to 415 residues: [Pyruvate dehydrogenase (acetyl-transferring)] kinase isozyme 3, mitochondrial (415 aa).

The 232-residue stretch at 131–362 (IEYKEKFGFD…DAVIYLKALS (232 aa)) folds into the Histidine kinase domain. 247–254 (ELFKNSMR) contributes to the ATP binding site. The residue at position 278 (Lys-278) is an N6-succinyllysine. ATP contacts are provided by residues Asp-287, 306 to 307 (ST), and 323 to 328 (GFGYGL). A disordered region spans residues 383-415 (TPEADDWSNPSSEPRDASKYKAKQDKIKSNRTF). The span at 395-415 (EPRDASKYKAKQDKIKSNRTF) shows a compositional bias: basic and acidic residues.

Belongs to the PDK/BCKDK protein kinase family. In terms of assembly, homodimer. Interacts with the pyruvate dehydrogenase complex subunit DLAT, and is part of the multimeric pyruvate dehydrogenase complex that contains multiple copies of pyruvate dehydrogenase (E1), dihydrolipoamide acetyltransferase (DLAT, E2) and lipoamide dehydrogenase (DLD, E3).

Its subcellular location is the mitochondrion matrix. The catalysed reaction is L-seryl-[pyruvate dehydrogenase E1 alpha subunit] + ATP = O-phospho-L-seryl-[pyruvate dehydrogenase E1 alpha subunit] + ADP + H(+). Functionally, inhibits pyruvate dehydrogenase activity by phosphorylation of the E1 subunit PDHA1, and thereby regulates glucose metabolism and aerobic respiration. Can also phosphorylate PDHA2. Decreases glucose utilization and increases fat metabolism in response to prolonged fasting, and as adaptation to a high-fat diet. Plays a role in glucose homeostasis and in maintaining normal blood glucose levels in function of nutrient levels and under starvation. Plays a role in the generation of reactive oxygen species. The chain is [Pyruvate dehydrogenase (acetyl-transferring)] kinase isozyme 3, mitochondrial (Pdk3) from Mus musculus (Mouse).